Reading from the N-terminus, the 267-residue chain is MAHNRITPLMNEQKKLLIAYYMPEYPVAGATLPVLEALQNSGADIIELGMPYSDPIGDGPVIQDAAQVAIRNGVHIGSLLDLVRKARAGEGCVKITVPIVLMGYCNPLIAYGGDCFLNDASEAGVDGLLIPDLPPEEAEDFLSRAKSFGLSVVFLISPVTQPERIRQIDALSTDFSYCLAVNATTGTGKLDEAERDADIESYLQRVSEHTRKKFVVGFGIRNRARVEKMCALADGAVVGTALLQAIAGAATPSQAASMAAGFWKTLR.

Catalysis depends on proton acceptor residues glutamate 47 and aspartate 58.

This sequence belongs to the TrpA family. In terms of assembly, tetramer of two alpha and two beta chains.

The catalysed reaction is (1S,2R)-1-C-(indol-3-yl)glycerol 3-phosphate + L-serine = D-glyceraldehyde 3-phosphate + L-tryptophan + H2O. The protein operates within amino-acid biosynthesis; L-tryptophan biosynthesis; L-tryptophan from chorismate: step 5/5. Functionally, the alpha subunit is responsible for the aldol cleavage of indoleglycerol phosphate to indole and glyceraldehyde 3-phosphate. This Prosthecochloris aestuarii (strain DSM 271 / SK 413) protein is Tryptophan synthase alpha chain.